The primary structure comprises 311 residues: Glycine--tRNA ligase alpha subunit (311 aa).

This sequence belongs to the class-II aminoacyl-tRNA synthetase family. Tetramer of two alpha and two beta subunits.

It localises to the cytoplasm. The catalysed reaction is tRNA(Gly) + glycine + ATP = glycyl-tRNA(Gly) + AMP + diphosphate. In Bradyrhizobium diazoefficiens (strain JCM 10833 / BCRC 13528 / IAM 13628 / NBRC 14792 / USDA 110), this protein is Glycine--tRNA ligase alpha subunit.